The sequence spans 372 residues: DNA replication and repair protein RecF (372 aa).

Residue 30 to 37 (GENGQGKT) participates in ATP binding.

Belongs to the RecF family.

It localises to the cytoplasm. Functionally, the RecF protein is involved in DNA metabolism; it is required for DNA replication and normal SOS inducibility. RecF binds preferentially to single-stranded, linear DNA. It also seems to bind ATP. The protein is DNA replication and repair protein RecF of Anaeromyxobacter sp. (strain K).